The sequence spans 269 residues: Formamidopyrimidine-DNA glycosylase (269 aa).

The Schiff-base intermediate with DNA role is filled by Pro-2. Glu-3 acts as the Proton donor in catalysis. The active-site Proton donor; for beta-elimination activity is Lys-57. Residues His-90, Arg-109, and Lys-150 each coordinate DNA. The segment at 235 to 269 (QVYGRKGEPCRICGMPVVGTKHAQRATFYCRQCQK) adopts an FPG-type zinc-finger fold. Catalysis depends on Arg-259, which acts as the Proton donor; for delta-elimination activity.

It belongs to the FPG family. In terms of assembly, monomer. Zn(2+) is required as a cofactor.

The catalysed reaction is Hydrolysis of DNA containing ring-opened 7-methylguanine residues, releasing 2,6-diamino-4-hydroxy-5-(N-methyl)formamidopyrimidine.. It catalyses the reaction 2'-deoxyribonucleotide-(2'-deoxyribose 5'-phosphate)-2'-deoxyribonucleotide-DNA = a 3'-end 2'-deoxyribonucleotide-(2,3-dehydro-2,3-deoxyribose 5'-phosphate)-DNA + a 5'-end 5'-phospho-2'-deoxyribonucleoside-DNA + H(+). Its function is as follows. Involved in base excision repair of DNA damaged by oxidation or by mutagenic agents. Acts as a DNA glycosylase that recognizes and removes damaged bases. Has a preference for oxidized purines, such as 7,8-dihydro-8-oxoguanine (8-oxoG). Has AP (apurinic/apyrimidinic) lyase activity and introduces nicks in the DNA strand. Cleaves the DNA backbone by beta-delta elimination to generate a single-strand break at the site of the removed base with both 3'- and 5'-phosphates. The chain is Formamidopyrimidine-DNA glycosylase from Klebsiella pneumoniae subsp. pneumoniae (strain ATCC 700721 / MGH 78578).